The primary structure comprises 271 residues: Putative phosphoenolpyruvate synthase regulatory protein (271 aa).

An ADP-binding site is contributed by 151 to 158; sequence GVSRSGKT.

Belongs to the pyruvate, phosphate/water dikinase regulatory protein family. PSRP subfamily.

The enzyme catalyses [pyruvate, water dikinase] + ADP = [pyruvate, water dikinase]-phosphate + AMP + H(+). It carries out the reaction [pyruvate, water dikinase]-phosphate + phosphate + H(+) = [pyruvate, water dikinase] + diphosphate. Functionally, bifunctional serine/threonine kinase and phosphorylase involved in the regulation of the phosphoenolpyruvate synthase (PEPS) by catalyzing its phosphorylation/dephosphorylation. The chain is Putative phosphoenolpyruvate synthase regulatory protein from Burkholderia mallei (strain NCTC 10247).